The primary structure comprises 259 residues: Protein unc-50 homolog B (259 aa).

Residues 1 to 11 (MLPTTSVSPRS) show a composition bias toward polar residues. A disordered region spans residues 1–21 (MLPTTSVSPRSPDNGILSPRD). The Cytoplasmic segment spans residues 1–82 (MLPTTSVSPR…TKDQWARDDP (82 aa)). Residues 83 to 103 (AFLVLLGIWLCVSTVGFGFVL) traverse the membrane as a helical segment. At 104–109 (DMSFFE) the chain is on the lumenal side. The helical transmembrane segment at 110–130 (TFTLLLWVVFIDCVGVGLLIA) threads the bilayer. Residues 131–158 (TSMWFVSNKYMVNRQGKDYDVEWGYTFD) are Cytoplasmic-facing. A helical membrane pass occupies residues 159–179 (VHLNAFYPLLVILHFIQLFFI). The Lumenal portion of the chain corresponds to 180 to 181 (NH). The chain crosses the membrane as a helical span at residues 182–202 (VILTGWFIGCFVGNTLWLIAI). The Cytoplasmic portion of the chain corresponds to 203-222 (GYYIYITFLGYSALPFLKNT). A helical transmembrane segment spans residues 223-243 (VVLLYPFAALALLYILSLALG). At 244–259 (WNFTAKLCLFYKYRVR) the chain is on the lumenal side.

This sequence belongs to the unc-50 family.

It is found in the nucleus inner membrane. The protein resides in the golgi apparatus membrane. In terms of biological role, involved in the cell surface expression of neuronal nicotinic receptors. Binds RNA. The protein is Protein unc-50 homolog B (unc50-b) of Xenopus laevis (African clawed frog).